The following is a 137-amino-acid chain: Large ribosomal subunit protein uL16 (137 aa).

The protein belongs to the universal ribosomal protein uL16 family. As to quaternary structure, part of the 50S ribosomal subunit.

In terms of biological role, binds 23S rRNA and is also seen to make contacts with the A and possibly P site tRNAs. The chain is Large ribosomal subunit protein uL16 from Xanthobacter autotrophicus (strain ATCC BAA-1158 / Py2).